The sequence spans 371 residues: Macronuclear solute carrier homolog CR-MSC (371 aa).

Solcar repeat units follow at residues 16 to 111 (RMNY…FYDK), 120 to 208 (ARPD…CKEN), and 215 to 304 (PHWI…LSQF). Helical transmembrane passes span 22 to 42 (FAAA…LDMV), 89 to 109 (TFFF…GYFY), 126 to 146 (VAAG…IDIV), 184 to 204 (AGAN…IYDW), 221 to 241 (LWGT…FDMI), and 281 to 301 (FGSF…ICYL).

It belongs to the mitochondrial carrier (TC 2.A.29) family.

It is found in the membrane. In Oxytricha trifallax (Sterkiella histriomuscorum), this protein is Macronuclear solute carrier homolog CR-MSC.